The primary structure comprises 232 residues: 5'-methylthioadenosine/S-adenosylhomocysteine nucleosidase (232 aa).

The active-site Proton acceptor is the Glu12. Substrate-binding positions include Gly78, Ile152, and 173–174; that span reads ME. Asp197 acts as the Proton donor in catalysis.

Belongs to the PNP/UDP phosphorylase family. MtnN subfamily. Homodimer.

It carries out the reaction S-adenosyl-L-homocysteine + H2O = S-(5-deoxy-D-ribos-5-yl)-L-homocysteine + adenine. The catalysed reaction is S-methyl-5'-thioadenosine + H2O = 5-(methylsulfanyl)-D-ribose + adenine. The enzyme catalyses 5'-deoxyadenosine + H2O = 5-deoxy-D-ribose + adenine. Its pathway is amino-acid biosynthesis; L-methionine biosynthesis via salvage pathway; S-methyl-5-thio-alpha-D-ribose 1-phosphate from S-methyl-5'-thioadenosine (hydrolase route): step 1/2. Its function is as follows. Catalyzes the irreversible cleavage of the glycosidic bond in both 5'-methylthioadenosine (MTA) and S-adenosylhomocysteine (SAH/AdoHcy) to adenine and the corresponding thioribose, 5'-methylthioribose and S-ribosylhomocysteine, respectively. Also cleaves 5'-deoxyadenosine, a toxic by-product of radical S-adenosylmethionine (SAM) enzymes, into 5-deoxyribose and adenine. Thus, is required for in vivo function of the radical SAM enzymes biotin synthase and lipoic acid synthase, that are inhibited by 5'-deoxyadenosine accumulation. In Pectobacterium carotovorum subsp. carotovorum (strain PC1), this protein is 5'-methylthioadenosine/S-adenosylhomocysteine nucleosidase.